We begin with the raw amino-acid sequence, 942 residues long: Valine--tRNA ligase (942 aa).

Positions 43 to 53 match the 'HIGH' region motif; sequence PNVTGTLHMGH. A 'KMSKS' region motif is present at residues 551 to 555; that stretch reads KMSKS. Lys554 is a binding site for ATP. Positions 876–942 form a coiled coil; sequence EGLVDLDAER…AGLREQRAKL (67 aa).

It belongs to the class-I aminoacyl-tRNA synthetase family. ValS type 1 subfamily. Monomer.

It is found in the cytoplasm. It carries out the reaction tRNA(Val) + L-valine + ATP = L-valyl-tRNA(Val) + AMP + diphosphate. Functionally, catalyzes the attachment of valine to tRNA(Val). As ValRS can inadvertently accommodate and process structurally similar amino acids such as threonine, to avoid such errors, it has a 'posttransfer' editing activity that hydrolyzes mischarged Thr-tRNA(Val) in a tRNA-dependent manner. The sequence is that of Valine--tRNA ligase from Stenotrophomonas maltophilia (strain K279a).